A 128-amino-acid polypeptide reads, in one-letter code: Putative lipid-binding protein At4g00165 (128 aa).

An N-terminal signal peptide occupies residues 1 to 23; it reads MGISKALRSLLILLLLNITFFFG. Intrachain disulfides connect Cys34-Cys90, Cys46-Cys76, Cys56-Cys75, and Cys92-Cys128.

Belongs to the plant LTP family. PEARLI1 subfamily.

It is found in the secreted. The chain is Putative lipid-binding protein At4g00165 from Arabidopsis thaliana (Mouse-ear cress).